A 201-amino-acid chain; its full sequence is ATP-dependent Clp protease proteolytic subunit (201 aa).

The active-site Nucleophile is Ser-97. The active site involves His-122.

The protein belongs to the peptidase S14 family. As to quaternary structure, fourteen ClpP subunits assemble into 2 heptameric rings which stack back to back to give a disk-like structure with a central cavity, resembling the structure of eukaryotic proteasomes.

It is found in the cytoplasm. The enzyme catalyses Hydrolysis of proteins to small peptides in the presence of ATP and magnesium. alpha-casein is the usual test substrate. In the absence of ATP, only oligopeptides shorter than five residues are hydrolyzed (such as succinyl-Leu-Tyr-|-NHMec, and Leu-Tyr-Leu-|-Tyr-Trp, in which cleavage of the -Tyr-|-Leu- and -Tyr-|-Trp bonds also occurs).. Functionally, cleaves peptides in various proteins in a process that requires ATP hydrolysis. Has a chymotrypsin-like activity. Plays a major role in the degradation of misfolded proteins. The protein is ATP-dependent Clp protease proteolytic subunit of Nitratidesulfovibrio vulgaris (strain DSM 19637 / Miyazaki F) (Desulfovibrio vulgaris).